A 770-amino-acid polypeptide reads, in one-letter code: Proprotein convertase subtilisin/kexin type 7 (770 aa).

The first 36 residues, 1 to 36 (MPKGRQKVPHLDAHLGLPICLWLELAIFFLVPQVMG), serve as a signal peptide directing secretion. A propeptide spanning residues 37–140 (LSEAGGLDIL…EQTLLKRAKR (104 aa)) is cleaved from the precursor. The Extracellular portion of the chain corresponds to 141–666 (SIHFNDPKYP…YTITPNTLKT (526 aa)). A Peptidase S8 domain is found at 152-472 (QWHLNNRRSP…FGLLNAWRLV (321 aa)). Asn-166 and Asn-174 each carry an N-linked (GlcNAc...) asparagine glycan. The Charge relay system role is filled by Asp-186. Residues 195–228 (DIAPNYSPEGSYDLNSNDPDPMPHPDEENGNHHG) are disordered. Residues 215–225 (PMPHPDEENGN) are compositionally biased toward basic and acidic residues. His-227 (charge relay system) is an active-site residue. A glycan (N-linked (GlcNAc...) asparagine) is linked at Asn-240. The active-site Charge relay system is the Ser-405. A P/Homo B domain is found at 480 to 617 (SVPYLASYVS…QLTLYGSMWS (138 aa)). A glycan (N-linked (GlcNAc...) asparagine) is linked at Asn-510. The chain crosses the membrane as a helical span at residues 667–687 (LVLVGCFSVFWTIYYMLEVCL). The Cytoplasmic segment spans residues 688–770 (SQRNKASTHG…LLQGKSGQIC (83 aa)).

The protein belongs to the peptidase S8 family. Ca(2+) is required as a cofactor. Widely expressed. Expressed in brain, lung, muscle, heart, liver, kidney, spleen and thymus.

The protein localises to the golgi apparatus. The protein resides in the trans-Golgi network membrane. With respect to regulation, inhibited by zinc and copper. Serine endoprotease that processes various proproteins by cleavage at paired basic amino acids, recognizing the RXXX[KR]R consensus motif. Likely functions in the constitutive secretory pathway. In Mus musculus (Mouse), this protein is Proprotein convertase subtilisin/kexin type 7 (Pcsk7).